Consider the following 287-residue polypeptide: Shikimate dehydrogenase (NADP(+)) (287 aa).

Shikimate contacts are provided by residues 20-22 (SRS) and Thr-67. The active-site Proton acceptor is the Lys-71. NADP(+) is bound at residue Glu-84. Asn-93 and Asp-108 together coordinate shikimate. NADP(+) contacts are provided by residues 132-136 (GAGGA), 156-161 (NRTAAR), and Met-226. Residue Tyr-228 coordinates shikimate. Gly-250 provides a ligand contact to NADP(+).

This sequence belongs to the shikimate dehydrogenase family. Homodimer.

The catalysed reaction is shikimate + NADP(+) = 3-dehydroshikimate + NADPH + H(+). Its pathway is metabolic intermediate biosynthesis; chorismate biosynthesis; chorismate from D-erythrose 4-phosphate and phosphoenolpyruvate: step 4/7. Involved in the biosynthesis of the chorismate, which leads to the biosynthesis of aromatic amino acids. Catalyzes the reversible NADPH linked reduction of 3-dehydroshikimate (DHSA) to yield shikimate (SA). The polypeptide is Shikimate dehydrogenase (NADP(+)) (Bordetella bronchiseptica (strain ATCC BAA-588 / NCTC 13252 / RB50) (Alcaligenes bronchisepticus)).